We begin with the raw amino-acid sequence, 147 residues long: MHRVTITLDDDLMEKLDAIIAARGYQNRSEAIRDLARIGIQQTAAETTSGHCVGAMVYTYDHSKRDLPRKLTQSFHHHHDLSRATMHVHLDHDQCLEVTILDGNASELQHFADHIFAERGVRYGRLVTIPAEPPEAHEHHHEHDASS.

Residues His-76, His-87, His-89, and Cys-95 each contribute to the Ni(2+) site.

Belongs to the transcriptional regulatory CopG/NikR family. Requires Ni(2+) as cofactor.

Functionally, transcriptional regulator. In Rhodopseudomonas palustris (strain TIE-1), this protein is Putative nickel-responsive regulator.